A 148-amino-acid polypeptide reads, in one-letter code: Large ribosomal subunit protein bL9 (148 aa).

The protein belongs to the bacterial ribosomal protein bL9 family.

In terms of biological role, binds to the 23S rRNA. This is Large ribosomal subunit protein bL9 from Staphylococcus aureus (strain bovine RF122 / ET3-1).